Here is a 268-residue protein sequence, read N- to C-terminus: Glutamate racemase (268 aa).

Residues 9–10 (DS) and 41–42 (YG) contribute to the substrate site. Cys73 (proton donor/acceptor) is an active-site residue. 74-75 (NS) lines the substrate pocket. The Proton donor/acceptor role is filled by Cys183. Substrate is bound at residue 184 to 185 (TH).

This sequence belongs to the aspartate/glutamate racemases family.

It carries out the reaction L-glutamate = D-glutamate. Its pathway is cell wall biogenesis; peptidoglycan biosynthesis. Its function is as follows. Provides the (R)-glutamate required for cell wall biosynthesis. This is Glutamate racemase from Shewanella piezotolerans (strain WP3 / JCM 13877).